The following is a 176-amino-acid chain: Ribosome maturation factor RimM (176 aa).

The 80-residue stretch at 93-172 (EGEFFYFDVL…EILTKDAKSI (80 aa)) folds into the PRC barrel domain.

This sequence belongs to the RimM family. In terms of assembly, binds ribosomal protein uS19.

Its subcellular location is the cytoplasm. An accessory protein needed during the final step in the assembly of 30S ribosomal subunit, possibly for assembly of the head region. Essential for efficient processing of 16S rRNA. May be needed both before and after RbfA during the maturation of 16S rRNA. It has affinity for free ribosomal 30S subunits but not for 70S ribosomes. The chain is Ribosome maturation factor RimM from Campylobacter curvus (strain 525.92).